A 396-amino-acid chain; its full sequence is Putative carbamoyltransferase YgeW (396 aa).

Carbamoyl phosphate contacts are provided by residues 71–74 (STRT), Gln98, 165–168 (HPTQ), and 330–331 (CL).

The protein belongs to the aspartate/ornithine carbamoyltransferase superfamily. Homotrimer.

The sequence is that of Putative carbamoyltransferase YgeW (ygeW) from Escherichia coli O6:H1 (strain CFT073 / ATCC 700928 / UPEC).